A 146-amino-acid chain; its full sequence is Large ribosomal subunit protein uL15 (146 aa).

Over residues 1–13 (MKLHELKPAEGSR) the composition is skewed to basic and acidic residues. A disordered region spans residues 1–51 (MKLHELKPAEGSRKVRNRVGRGTSSGNGKTSGRGQKGQKARSGGGVRLGFE). Gly residues-rich tracts occupy residues 23–35 (TSSGNGKTSGRGQ) and 42–51 (SGGGVRLGFE).

This sequence belongs to the universal ribosomal protein uL15 family. In terms of assembly, part of the 50S ribosomal subunit.

Its function is as follows. Binds to the 23S rRNA. This is Large ribosomal subunit protein uL15 from Streptococcus pneumoniae serotype 2 (strain D39 / NCTC 7466).